The chain runs to 253 residues: 5-oxoprolinase subunit A (253 aa).

Belongs to the LamB/PxpA family. Forms a complex composed of PxpA, PxpB and PxpC.

It carries out the reaction 5-oxo-L-proline + ATP + 2 H2O = L-glutamate + ADP + phosphate + H(+). Its function is as follows. Catalyzes the cleavage of 5-oxoproline to form L-glutamate coupled to the hydrolysis of ATP to ADP and inorganic phosphate. The chain is 5-oxoprolinase subunit A from Bacillus anthracis (strain CDC 684 / NRRL 3495).